We begin with the raw amino-acid sequence, 226 residues long: Leucyl/phenylalanyl-tRNA--protein transferase (226 aa).

The protein belongs to the L/F-transferase family.

Its subcellular location is the cytoplasm. The catalysed reaction is N-terminal L-lysyl-[protein] + L-leucyl-tRNA(Leu) = N-terminal L-leucyl-L-lysyl-[protein] + tRNA(Leu) + H(+). It carries out the reaction N-terminal L-arginyl-[protein] + L-leucyl-tRNA(Leu) = N-terminal L-leucyl-L-arginyl-[protein] + tRNA(Leu) + H(+). It catalyses the reaction L-phenylalanyl-tRNA(Phe) + an N-terminal L-alpha-aminoacyl-[protein] = an N-terminal L-phenylalanyl-L-alpha-aminoacyl-[protein] + tRNA(Phe). Functionally, functions in the N-end rule pathway of protein degradation where it conjugates Leu, Phe and, less efficiently, Met from aminoacyl-tRNAs to the N-termini of proteins containing an N-terminal arginine or lysine. The sequence is that of Leucyl/phenylalanyl-tRNA--protein transferase from Bradyrhizobium diazoefficiens (strain JCM 10833 / BCRC 13528 / IAM 13628 / NBRC 14792 / USDA 110).